The following is a 61-amino-acid chain: Cytotoxin homolog 3 (61 aa).

Cystine bridges form between Cys3–Cys22, Cys15–Cys39, Cys43–Cys54, and Cys55–Cys60.

Belongs to the three-finger toxin family. Short-chain subfamily. Orphan group XV sub-subfamily. In terms of tissue distribution, expressed by the venom gland.

It is found in the secreted. Its subcellular location is the target cell membrane. In terms of biological role, has low cytotoxic activity. The sequence is that of Cytotoxin homolog 3 from Naja melanoleuca (Forest cobra).